The chain runs to 164 residues: 3-isopropylmalate dehydratase small subunit 1 (164 aa).

This sequence belongs to the LeuD family. LeuD type 2 subfamily. As to quaternary structure, heterodimer of LeuC and LeuD.

It carries out the reaction (2R,3S)-3-isopropylmalate = (2S)-2-isopropylmalate. It functions in the pathway amino-acid biosynthesis; L-leucine biosynthesis; L-leucine from 3-methyl-2-oxobutanoate: step 2/4. In terms of biological role, catalyzes the isomerization between 2-isopropylmalate and 3-isopropylmalate, via the formation of 2-isopropylmaleate. The sequence is that of 3-isopropylmalate dehydratase small subunit 1 (leuD1) from Pyrococcus furiosus (strain ATCC 43587 / DSM 3638 / JCM 8422 / Vc1).